A 97-amino-acid polypeptide reads, in one-letter code: uncharacterized protein (97 aa).

This is an uncharacterized protein from Enterobacteria phage T4 (Bacteriophage T4).